Consider the following 106-residue polypeptide: Large ribosomal subunit protein bL21 (106 aa).

Belongs to the bacterial ribosomal protein bL21 family. Part of the 50S ribosomal subunit. Contacts protein L20.

This protein binds to 23S rRNA in the presence of protein L20. The sequence is that of Large ribosomal subunit protein bL21 from Thermosipho africanus (strain TCF52B).